Reading from the N-terminus, the 434-residue chain is Ribitol-5-phosphate xylosyltransferase 1 (434 aa).

Over 1–7 the chain is Cytoplasmic; it reads MRFFRRK. The chain crosses the membrane as a helical; Signal-anchor for type II membrane protein span at residues 8 to 28; the sequence is IAIIVILAYAIFSLYAAYNVF. Topologically, residues 29–434 are extracellular; the sequence is FSKRVISRVH…VLEENFFKIT (406 aa).

The protein belongs to the TMEM5 family.

Its subcellular location is the golgi apparatus membrane. The catalysed reaction is 3-O-[Rib-ol-P-Rib-ol-P-3-beta-D-GalNAc-(1-&gt;3)-beta-D-GlcNAc-(1-&gt;4)-(O-6-P-alpha-D-Man)]-Thr-[protein] + UDP-alpha-D-xylose = 3-O-[beta-D-Xyl-(1-&gt;4)-Rib-ol-P-Rib-ol-P-3-beta-D-GalNAc-(1-&gt;3)-beta-D-GlcNAc-(1-&gt;4)-(O-6-P-alpha-D-Man)]-Thr-[protein] + UDP + H(+). The protein operates within protein modification; protein glycosylation. Acts as a UDP-D-xylose:ribitol-5-phosphate beta1,4-xylosyltransferase, which catalyzes the transfer of UDP-D-xylose to ribitol 5-phosphate (Rbo5P) to form the Xylbeta1-4Rbo5P linkage on O-mannosyl glycan. Participates in the biosynthesis of the phosphorylated O-mannosyl trisaccharide (N-acetylgalactosamine-beta-3-N-acetylglucosamine-beta-4-(phosphate-6-)mannose), a carbohydrate structure present in alpha-dystroglycan (DAG1), which is required for binding laminin G-like domain-containing extracellular proteins with high affinity. This is Ribitol-5-phosphate xylosyltransferase 1 (rxylt1) from Danio rerio (Zebrafish).